Here is a 283-residue protein sequence, read N- to C-terminus: Coiled-coil domain-containing protein 42 homolog (283 aa).

2 coiled-coil regions span residues 31-139 and 174-204; these read ATQL…LQRY and QDLR…HRVS.

The protein belongs to the CFAP73 family.

The sequence is that of Coiled-coil domain-containing protein 42 homolog from Monosiga brevicollis (Choanoflagellate).